Consider the following 36-residue polypeptide: Lambda-hexatoxin-Hv1a (36 aa).

4 disulfide bridges follow: Cys3–Cys17, Cys10–Cys22, Cys13–Cys14, and Cys16–Cys33.

It belongs to the neurotoxin 11 (kappa toxin) family. Expressed by the venom gland.

It is found in the secreted. In terms of biological role, this excitatory toxin inhibits insect calcium-activated potassium (KCa) channels (Slo-type). The polypeptide is Lambda-hexatoxin-Hv1a (Hadronyche versuta (Blue mountains funnel-web spider)).